We begin with the raw amino-acid sequence, 259 residues long: Leucine-rich repeat-containing protein 61 (259 aa).

LRR repeat units follow at residues 32–53 (SILL…GECL), 54–75 (GLEW…ASLR), 76–97 (QLAV…ATCE), and 98–119 (NLQS…QCLA). Residues 138 to 178 (NPLCANPSYWAAVRELLPGLKVIDGERVIGRGSEFYQLCRD) enclose the LRRCT domain.

The polypeptide is Leucine-rich repeat-containing protein 61 (LRRC61) (Homo sapiens (Human)).